Reading from the N-terminus, the 158-residue chain is MSHSIPLTKESYESLQEELKRLIRVERPKVIQDIAEARSHGDLSENAEYDAAKNRQGFIEGRIQELNSKLARAYVVDLSNMKPDKVVFGSTVTLYDTASEEEITYKIVGEDEADIKLGKISCTSPVGKALIGHKLDDSVKVKVPAGTKEYEIIDIKYE.

It belongs to the GreA/GreB family.

Necessary for efficient RNA polymerase transcription elongation past template-encoded arresting sites. The arresting sites in DNA have the property of trapping a certain fraction of elongating RNA polymerases that pass through, resulting in locked ternary complexes. Cleavage of the nascent transcript by cleavage factors such as GreA or GreB allows the resumption of elongation from the new 3'terminus. GreA releases sequences of 2 to 3 nucleotides. The chain is Transcription elongation factor GreA from Pelobacter propionicus (strain DSM 2379 / NBRC 103807 / OttBd1).